A 26-amino-acid chain; its full sequence is AMP deaminase 1 (26 aa).

It belongs to the metallo-dependent hydrolases superfamily. Adenosine and AMP deaminases family. In terms of assembly, homotetramer. Requires Zn(2+) as cofactor.

The catalysed reaction is AMP + H2O + H(+) = IMP + NH4(+). Its pathway is purine metabolism; IMP biosynthesis via salvage pathway; IMP from AMP: step 1/1. In terms of biological role, AMP deaminase plays a critical role in energy metabolism. The polypeptide is AMP deaminase 1 (AMPD1) (Oryctolagus cuniculus (Rabbit)).